A 422-amino-acid chain; its full sequence is Calpain-2 catalytic subunit (422 aa).

A Calpain catalytic domain is found at 1–66 (QKLIRIRNPW…YSRLEICNLT (66 aa)). Residue Asn8 is part of the active site. The Ca(2+) site is built by Glu14, Asp21, and Glu45. A domain III region spans residues 67 to 236 (PDTLTSDTYK…KKADYQAVDD (170 aa)). A linker region spans residues 237-251 (EIEADLEEADVSEDD). Residues 252–422 (IDDGFRRLFA…LISWLCFSVL (171 aa)) form a domain IV region. Residues Ala264, Asp267, Glu269, Glu274, Asp307, Asp309, Thr311, Lys313, Glu318, Asp337, Asp339, Ser341, Thr343, Glu348, Asp380, and Asn383 each coordinate Ca(2+). EF-hand domains are found at residues 294-327 (LSIETCKIMVDMLDSDGTGKLGLKEFYVLWTKIQ) and 324-359 (TKIQKYQKIYREIDVDRSGTMNSYEMRKALEEAGFK). One can recognise an EF-hand 3 domain in the interval 389–422 (VRLETLFKIFKQLDPDNTGMIQLDLISWLCFSVL).

It belongs to the peptidase C2 family. In terms of assembly, forms a heterodimer with a small (regulatory) subunit (CAPNS1). Interacts with CPEB3; this leads to cleavage of CPEB3. Ca(2+) is required as a cofactor. Ubiquitous.

Its subcellular location is the cytoplasm. The protein localises to the cell membrane. The catalysed reaction is Broad endopeptidase specificity.. Its activity is regulated as follows. Activated by 200-1000 micromolar concentrations of calcium and inhibited by calpastatin. Calcium-regulated non-lysosomal thiol-protease which catalyzes limited proteolysis of substrates involved in cytoskeletal remodeling and signal transduction. Proteolytically cleaves MYOC at 'Arg-226'. Proteolytically cleaves CPEB3 following neuronal stimulation which abolishes CPEB3 translational repressor activity, leading to translation of CPEB3 target mRNAs. The protein is Calpain-2 catalytic subunit (CAPN2) of Oryctolagus cuniculus (Rabbit).